Here is a 275-residue protein sequence, read N- to C-terminus: Membrane protein insertase YidC 1 (275 aa).

The first 25 residues, 1 to 25, serve as a signal peptide directing secretion; the sequence is MRKVLRVKKNIKIARIVPLVLLLVA. The N-palmitoyl cysteine moiety is linked to residue Cys-26. A lipid anchor (S-diacylglycerol cysteine) is attached at Cys-26. 5 helical membrane passes run 58–78, 129–149, 171–191, 198–216, and 222–240; these read SIGVGIILFTLTIRLMLMPLF, YASLLPLLIQMPVMIALFQAL, LYLLPVLAAVFTFLSTWLTNL, VMMTVMIYVMPLMIFFMGF, and VVLYWTVSNAFQVVQLLLL.

The protein belongs to the OXA1/ALB3/YidC family. Type 2 subfamily.

It is found in the cell membrane. Required for the insertion and/or proper folding and/or complex formation of integral membrane proteins into the membrane. Involved in integration of membrane proteins that insert both dependently and independently of the Sec translocase complex, as well as at least some lipoproteins. In Streptococcus pyogenes serotype M1, this protein is Membrane protein insertase YidC 1.